A 363-amino-acid chain; its full sequence is Phospho-N-acetylmuramoyl-pentapeptide-transferase (363 aa).

The next 11 membrane-spanning stretches (helical) occupy residues 27 to 47 (AGAA…PLIA), 76 to 96 (TMGG…WADL), 97 to 117 (TDGY…VGFA), 137 to 157 (LGCE…LMPA), 171 to 191 (WLLP…TGFG), 202 to 222 (GLAI…SYLV), 226 to 246 (VFAD…CVFC), 248 to 268 (ALVG…AVFM), 271 to 291 (TGSL…KHEL), 292 to 312 (VLCI…IQVF), and 340 to 360 (KIVI…LATL).

It belongs to the glycosyltransferase 4 family. MraY subfamily. Mg(2+) is required as a cofactor.

The protein localises to the cell inner membrane. The enzyme catalyses UDP-N-acetyl-alpha-D-muramoyl-L-alanyl-gamma-D-glutamyl-meso-2,6-diaminopimeloyl-D-alanyl-D-alanine + di-trans,octa-cis-undecaprenyl phosphate = di-trans,octa-cis-undecaprenyl diphospho-N-acetyl-alpha-D-muramoyl-L-alanyl-D-glutamyl-meso-2,6-diaminopimeloyl-D-alanyl-D-alanine + UMP. It participates in cell wall biogenesis; peptidoglycan biosynthesis. Its function is as follows. Catalyzes the initial step of the lipid cycle reactions in the biosynthesis of the cell wall peptidoglycan: transfers peptidoglycan precursor phospho-MurNAc-pentapeptide from UDP-MurNAc-pentapeptide onto the lipid carrier undecaprenyl phosphate, yielding undecaprenyl-pyrophosphoryl-MurNAc-pentapeptide, known as lipid I. The protein is Phospho-N-acetylmuramoyl-pentapeptide-transferase of Gluconacetobacter diazotrophicus (strain ATCC 49037 / DSM 5601 / CCUG 37298 / CIP 103539 / LMG 7603 / PAl5).